Here is a 346-residue protein sequence, read N- to C-terminus: Putative D-alanine--D-lactate ligase (346 aa).

In terms of domain architecture, ATP-grasp spans 137–338 (YVVARSAGIA…LSEVIDRTLS (202 aa)). 163–216 (RLTYPVFVKPARSGSSFGVSKVCRPEDLATAVESARRYDTKVLIEAAVVGSEVG) contributes to the ATP binding site. Mg(2+) is bound by residues Asp-292, Glu-305, and Asn-307.

It belongs to the D-alanine--D-alanine ligase family. It depends on Mg(2+) as a cofactor. Mn(2+) serves as cofactor.

The protein resides in the cell membrane. Functionally, required for resistance to glycopeptides antibiotics. D-Ala--D-Ala ligase of altered specificity which catalyzes ester bond formation between D-Ala and various D-hydroxy acids; producing a peptidoglycan which does not terminate by D-alanine but by D-lactate, thus preventing vancomycin binding. This Streptomyces coelicolor (strain ATCC BAA-471 / A3(2) / M145) protein is Putative D-alanine--D-lactate ligase.